The following is a 379-amino-acid chain: Acetylornithine aminotransferase (379 aa).

Residues 93–94 (GA) and Phe120 each bind pyridoxal 5'-phosphate. Arg123 provides a ligand contact to N(2)-acetyl-L-ornithine. 205-208 (DEVQ) provides a ligand contact to pyridoxal 5'-phosphate. Position 234 is an N6-(pyridoxal phosphate)lysine (Lys234). Position 262 (Ser262) interacts with N(2)-acetyl-L-ornithine. Thr263 serves as a coordination point for pyridoxal 5'-phosphate.

Belongs to the class-III pyridoxal-phosphate-dependent aminotransferase family. ArgD subfamily. Homodimer. Requires pyridoxal 5'-phosphate as cofactor.

It localises to the cytoplasm. The enzyme catalyses N(2)-acetyl-L-ornithine + 2-oxoglutarate = N-acetyl-L-glutamate 5-semialdehyde + L-glutamate. It functions in the pathway amino-acid biosynthesis; L-arginine biosynthesis; N(2)-acetyl-L-ornithine from L-glutamate: step 4/4. The chain is Acetylornithine aminotransferase from Streptococcus mutans serotype c (strain ATCC 700610 / UA159).